An 88-amino-acid polypeptide reads, in one-letter code: UPF0297 protein EAT1b_2723 (88 aa).

The protein belongs to the UPF0297 family.

The polypeptide is UPF0297 protein EAT1b_2723 (Exiguobacterium sp. (strain ATCC BAA-1283 / AT1b)).